The primary structure comprises 250 residues: Triosephosphate isomerase (250 aa).

9-11 (NWK) is a substrate binding site. Catalysis depends on H95, which acts as the Electrophile. E167 acts as the Proton acceptor in catalysis. Substrate is bound by residues G173, S213, and 234–235 (GG).

This sequence belongs to the triosephosphate isomerase family. As to quaternary structure, homodimer.

The protein resides in the cytoplasm. The catalysed reaction is D-glyceraldehyde 3-phosphate = dihydroxyacetone phosphate. Its pathway is carbohydrate biosynthesis; gluconeogenesis. It functions in the pathway carbohydrate degradation; glycolysis; D-glyceraldehyde 3-phosphate from glycerone phosphate: step 1/1. Functionally, involved in the gluconeogenesis. Catalyzes stereospecifically the conversion of dihydroxyacetone phosphate (DHAP) to D-glyceraldehyde-3-phosphate (G3P). The chain is Triosephosphate isomerase from Chloroflexus aurantiacus (strain ATCC 29366 / DSM 635 / J-10-fl).